A 94-amino-acid polypeptide reads, in one-letter code: Cell division topological specificity factor (94 aa).

The protein belongs to the MinE family.

Prevents the cell division inhibition by proteins MinC and MinD at internal division sites while permitting inhibition at polar sites. This ensures cell division at the proper site by restricting the formation of a division septum at the midpoint of the long axis of the cell. This chain is Cell division topological specificity factor, found in Alkalilimnicola ehrlichii (strain ATCC BAA-1101 / DSM 17681 / MLHE-1).